The following is a 70-amino-acid chain: Large ribosomal subunit protein uL29 (70 aa).

It belongs to the universal ribosomal protein uL29 family.

This Prochlorococcus marinus (strain MIT 9211) protein is Large ribosomal subunit protein uL29.